Consider the following 515-residue polypeptide: MTLPPQPSRLKPPRNTSSLSLRWRVMLLAMSMVAMVVVLMSVAVYAVVSRALYDDIDNQLHSRARLLIESGSLAADPGKAIEGTAYSDVNAMLVNPGRSIYTANQQGQTLPLGEAEKDVISGELLLSLRTANHQRILAVHLTNGSSLLISKSLAPTGQVLGRLGTVLLIVGGVGVAVAAIAGGMVARAGLRPVGRLTQAAERVARTDDLRPIPVFGSDELARLTEAFNMMLRALTESRERQARLVSDAGHELRTPLTSLRTNVELLMASQAPGAPRLPEEEMAGLRADVIAQIEELSTLVGDLVDLTRDEAGGVVYETVDMAEVVDRSLERVRRRRNDIEFDVNVVGWQVYGDAAGLARAVLNLLDNAAKWSPPGGRVGVRLTQTDPVHAELVVSDQGPGIPEAERRLVFERFYRSTAARAMPGSGLGLAIVKQVVLKHGGALRVEDTVPGGNPPGTSFYVMLPGRPLTPGGNGTAPVPAAQFDPDMRSAGSRADRRVIKNTETNGKSRSASKEL.

Over 1 to 24 the chain is Cytoplasmic; that stretch reads MTLPPQPSRLKPPRNTSSLSLRWR. A helical transmembrane segment spans residues 25 to 45; sequence VMLLAMSMVAMVVVLMSVAVY. The Extracellular portion of the chain corresponds to 46 to 165; that stretch reads AVVSRALYDD…TGQVLGRLGT (120 aa). The chain crosses the membrane as a helical span at residues 166 to 186; the sequence is VLLIVGGVGVAVAAIAGGMVA. The 53-residue stretch at 187-239 folds into the HAMP domain; the sequence is RAGLRPVGRLTQAAERVARTDDLRPIPVFGSDELARLTEAFNMMLRALTESRE. The Cytoplasmic portion of the chain corresponds to 187–515; sequence RAGLRPVGRL…GKSRSASKEL (329 aa). Residues 247 to 467 form the Histidine kinase domain; that stretch reads DAGHELRTPL…SFYVMLPGRP (221 aa). Position 250 is a phosphohistidine; by autocatalysis (His250). The segment at 468–515 is disordered; that stretch reads LTPGGNGTAPVPAAQFDPDMRSAGSRADRRVIKNTETNGKSRSASKEL.

It depends on Mg(2+) as a cofactor. Mn(2+) serves as cofactor. Post-translationally, autophosphorylated.

The protein resides in the cell membrane. It carries out the reaction ATP + protein L-histidine = ADP + protein N-phospho-L-histidine.. Functionally, member of the two-component regulatory system MprB/MprA which contributes to maintaining a balance among several systems involved in stress resistance and is required for establishment and maintenance of persistent infection in the host. In response to environmental signals MprB acts both as a membrane-associated protein kinase that undergoes autophosphorylation and subsequently transfers the phosphate to MprA, and a protein phosphatase that dephosphorylates phospho-MprA. This is Signal transduction histidine-protein kinase/phosphatase MprB (mprB) from Mycobacterium sp. (strain JLS).